The chain runs to 499 residues: MIKRALISVFDKTGILDLAKFLESRDVEIISTGGTYKHLKENGVKVIDIEEVTGFPEMLDGRVKTLNPLIHGGILAIRDNEEHMKVIEEKGIKPIDMVVVNLYPFFNKVEEDLSFDEKVEFIDIGGPTMIRAAAKNFKDVVVLTDTKDYENVINEIKENNQVNIKTKKKLAGKVFNLMSAYDAAISNFLLEEEYPEYLTLSYKKNMDLRYGENPHQTAAYYTSTVGKYPMKNFKKLNGKELSYNNIKDMDIAWKTVCEFKEVACCALKHNTPCGVAIGDTIQEVYTKAYECDPISIFGGIVAFNRKVDKETAENLIKIFLEIVVAPDFDEDALEVLKTKKNLRVIKCEEKSTQDKDMTKVDGGILVQQSDNKLLEDTKVVTEKSPTEKEMNDLIFGMKVVKYVKSNAIVVIKDGMAKGIGGGQVNRIWAAKEALDRAGDGVVLASDAFFPFGDVAEEAAKWGIKAIIQPGGSIRDEESIKVCNEKGISMVFTGVRHFKH.

The region spanning 1 to 144 (MIKRALISVF…KNFKDVVVLT (144 aa)) is the MGS-like domain.

This sequence belongs to the PurH family.

It catalyses the reaction (6R)-10-formyltetrahydrofolate + 5-amino-1-(5-phospho-beta-D-ribosyl)imidazole-4-carboxamide = 5-formamido-1-(5-phospho-D-ribosyl)imidazole-4-carboxamide + (6S)-5,6,7,8-tetrahydrofolate. It carries out the reaction IMP + H2O = 5-formamido-1-(5-phospho-D-ribosyl)imidazole-4-carboxamide. It participates in purine metabolism; IMP biosynthesis via de novo pathway; 5-formamido-1-(5-phospho-D-ribosyl)imidazole-4-carboxamide from 5-amino-1-(5-phospho-D-ribosyl)imidazole-4-carboxamide (10-formyl THF route): step 1/1. The protein operates within purine metabolism; IMP biosynthesis via de novo pathway; IMP from 5-formamido-1-(5-phospho-D-ribosyl)imidazole-4-carboxamide: step 1/1. This is Bifunctional purine biosynthesis protein PurH from Clostridium botulinum (strain 657 / Type Ba4).